We begin with the raw amino-acid sequence, 141 residues long: Protein X (141 aa).

The span at 24–48 shows a compositional bias: low complexity; it reads QSSGPSFPRPAAGSAASSASSPSPS. The tract at residues 24–52 is disordered; sequence QSSGPSFPRPAAGSAASSASSPSPSDESD. Residues 68–113 are mitochondrial targeting sequence; it reads PCCLVFTCAELRTMDSTVNFVSWHANRQLGMPSKDLWTPYIKDQLL.

It belongs to the orthohepadnavirus protein X family. May form homodimer. May interact with host CEBPA, CFLAR, CREB1, DDB1, E4F1, HBXIP, HSPD1/HSP60, NFKBIA, POLR2E and SMAD4. Interacts with host SMC5-SMC6 complex and induces its degradation. Interacts with host TRPC4AP; leading to prevent ubiquitination of TRPC4AP. Interacts with host PLSCR1; this interaction promotes ubiquitination and degradation of HBx and impairs HBx-mediated cell proliferation. Post-translationally, a fraction may be phosphorylated in insect cells and HepG2 cells, a human hepatoblastoma cell line. Phosphorylated in vitro by host protein kinase C or mitogen-activated protein kinase. N-acetylated in insect cells.

It localises to the host cytoplasm. Its subcellular location is the host nucleus. The protein resides in the host mitochondrion. Its function is as follows. Multifunctional protein that plays a role in silencing host antiviral defenses and promoting viral transcription. Does not seem to be essential for HBV infection. May be directly involved in development of cirrhosis and liver cancer (hepatocellular carcinoma). Most of cytosolic activities involve modulation of cytosolic calcium. The effect on apoptosis is controversial depending on the cell types in which the studies have been conducted. May induce apoptosis by localizing in mitochondria and causing loss of mitochondrial membrane potential. May also modulate apoptosis by binding host CFLAR, a key regulator of the death-inducing signaling complex (DISC). Promotes viral transcription by using the host E3 ubiquitin ligase DDB1 to target the SMC5-SMC6 complex to proteasomal degradation. This host complex would otherwise bind to viral episomal DNA, and prevents its transcription. Moderately stimulates transcription of many different viral and cellular transcription elements. Promoters and enhancers stimulated by HBx contain DNA binding sites for NF-kappa-B, AP-1, AP-2, c-EBP, ATF/CREB, or the calcium-activated factor NF-AT. This chain is Protein X, found in Woodchuck hepatitis B virus (isolate 7) (WHV).